A 442-amino-acid chain; its full sequence is ATP-dependent protease ATPase subunit HslU (442 aa).

ATP is bound by residues Ile18 and 60 to 65 (GVGKTE). Residues 136-156 (LPKPKNDWDSTDSDANSNTRQ) are disordered. ATP-binding residues include Asp255, Glu320, and Arg392.

It belongs to the ClpX chaperone family. HslU subfamily. A double ring-shaped homohexamer of HslV is capped on each side by a ring-shaped HslU homohexamer. The assembly of the HslU/HslV complex is dependent on binding of ATP.

The protein resides in the cytoplasm. In terms of biological role, ATPase subunit of a proteasome-like degradation complex; this subunit has chaperone activity. The binding of ATP and its subsequent hydrolysis by HslU are essential for unfolding of protein substrates subsequently hydrolyzed by HslV. HslU recognizes the N-terminal part of its protein substrates and unfolds these before they are guided to HslV for hydrolysis. This Shewanella sp. (strain MR-7) protein is ATP-dependent protease ATPase subunit HslU.